Consider the following 242-residue polypeptide: Eukaryotic translation initiation factor 3 subunit J (242 aa).

Residues 1–10 (MASWDDEDFE) are compositionally biased toward acidic residues. Disordered regions lie at residues 1 to 58 (MASW…KAQR), 71 to 97 (MKLK…MMNA), and 201 to 242 (REEK…DDFM). Over residues 11-21 (VPAAATPAVPA) the composition is skewed to low complexity. The segment covering 23 to 38 (WDDDEEEDVMDSWDAE) has biased composition (acidic residues). The segment covering 71-89 (MKLKPEDASTKRDRQRQAE) has biased composition (basic and acidic residues).

It belongs to the eIF-3 subunit J family. Component of the eukaryotic translation initiation factor 3 (eIF-3) complex.

The protein localises to the cytoplasm. Component of the eukaryotic translation initiation factor 3 (eIF-3) complex, which is involved in protein synthesis of a specialized repertoire of mRNAs and, together with other initiation factors, stimulates binding of mRNA and methionyl-tRNAi to the 40S ribosome. The eIF-3 complex specifically targets and initiates translation of a subset of mRNAs involved in cell proliferation. In Yarrowia lipolytica (strain CLIB 122 / E 150) (Yeast), this protein is Eukaryotic translation initiation factor 3 subunit J.